A 360-amino-acid chain; its full sequence is Photosystem II protein D1 2 (360 aa).

Helical transmembrane passes span 29–46 (YIGWFGVLMVPTLLSATI), 118–133 (HFLIGIFAYLGREWEF), and 142–156 (WICVAYSAPVAAATA). His118 contacts chlorophyll a. Pheophytin a is bound at residue Tyr126. 2 residues coordinate [CaMn4O5] cluster: Asp170 and Glu189. Residues 197 to 218 (LHMFGVAGVFGGSLFAAMHGSL) form a helical membrane-spanning segment. Residue His198 coordinates chlorophyll a. Residues His215 and 264–265 (SF) contribute to the a quinone site. His215 serves as a coordination point for Fe cation. His272 lines the Fe cation pocket. Residues 274–288 (FLAAWPVIGIWLTSL) form a helical membrane-spanning segment. [CaMn4O5] cluster contacts are provided by His332, Glu333, Asp342, and Ala344. A propeptide spanning residues 345 to 360 (GTESAPVAFAAALGDG) is cleaved from the precursor.

The protein belongs to the reaction center PufL/M/PsbA/D family. In terms of assembly, PSII is composed of 1 copy each of membrane proteins PsbA, PsbB, PsbC, PsbD, PsbE, PsbF, PsbH, PsbI, PsbJ, PsbK, PsbL, PsbM, PsbT, PsbX, Psb30/Ycf12, peripheral proteins PsbO, CyanoQ (PsbQ), PsbU, PsbV and a large number of cofactors. It forms dimeric complexes. It depends on The D1/D2 heterodimer binds P680, chlorophylls that are the primary electron donor of PSII, and subsequent electron acceptors. It shares a non-heme iron and each subunit binds pheophytin, quinone, additional chlorophylls, carotenoids and lipids. D1 provides most of the ligands for the Mn4-Ca-O5 cluster of the oxygen-evolving complex (OEC). There is also a Cl(-1) ion associated with D1 and D2, which is required for oxygen evolution. The PSII complex binds additional chlorophylls, carotenoids and specific lipids. as a cofactor. Tyr-161 forms a radical intermediate that is referred to as redox-active TyrZ, YZ or Y-Z. In terms of processing, C-terminally processed by CtpA; processing is essential to allow assembly of the oxygen-evolving complex and thus photosynthetic growth.

The protein resides in the cell inner membrane. The enzyme catalyses 2 a plastoquinone + 4 hnu + 2 H2O = 2 a plastoquinol + O2. Its function is as follows. Photosystem II (PSII) is a light-driven water:plastoquinone oxidoreductase that uses light energy to abstract electrons from H(2)O, generating O(2) and a proton gradient subsequently used for ATP formation. It consists of a core antenna complex that captures photons, and an electron transfer chain that converts photonic excitation into a charge separation. The D1/D2 (PsbA/PsbD) reaction center heterodimer binds P680, the primary electron donor of PSII as well as several subsequent electron acceptors. The chain is Photosystem II protein D1 2 from Gloeobacter violaceus (strain ATCC 29082 / PCC 7421).